The following is a 220-amino-acid chain: Sericin-2 (220 aa).

Composition is skewed to low complexity over residues 1–131 and 141–155; these read SSST…ASSS and NESS…QNSA. Positions 1-220 are disordered; the sequence is SSSTNNSSGS…SSSSSSWSSA (220 aa). The span at 156 to 165 shows a compositional bias: polar residues; it reads TRSQVINADG. Over residues 166–220 the composition is skewed to low complexity; that stretch reads SQSSSSSSSSASNQASATSSSSVSADGSESESSSSSSSSSSSSSESSSSSSWSSA.

Produced exclusively in the middle (MSG) section of silk glands.

It localises to the secreted. Functionally, provides the silk fibroin thread with a sticky coating. Acts as a cement by sticking silk threads together. This is Sericin-2 (SER2) from Galleria mellonella (Greater wax moth).